Consider the following 1175-residue polypeptide: Tyrosine-protein phosphatase non-receptor type 21 (1175 aa).

One can recognise an FERM domain in the interval 23–308 (LVARIQLLNN…ARHKFYRLNQ (286 aa)). Residues 395–421 (YSAHSTNSLNTPQPYLQPSPMSSNPSI) show a composition bias toward polar residues. The segment at 395–445 (YSAHSTNSLNTPQPYLQPSPMSSNPSIPGSDVMRPDYIPSHRHSALIPPSY) is disordered. 10 positions are modified to phosphoserine: Ser577, Ser589, Ser590, Ser637, Ser673, Ser710, Ser711, Ser798, Ser800, and Ser805. The disordered stretch occupies residues 663–702 (DVAPRTFSAGSQSSVFSDKVKQEGTEEQGSGGYSHKKSLS). One can recognise a Tyrosine-protein phosphatase domain in the interval 897–1168 (VFTEYERILK…TFVYRVLIQF (272 aa)). Residues Glu1068, 1109-1115 (CSAGVGR), and Gln1153 each bind substrate. Cys1109 functions as the Phosphocysteine intermediate in the catalytic mechanism.

It belongs to the protein-tyrosine phosphatase family. Non-receptor class subfamily. As to expression, particularly abundantly in adrenal glands.

Its subcellular location is the cytoplasm. It is found in the cytoskeleton. It catalyses the reaction O-phospho-L-tyrosyl-[protein] + H2O = L-tyrosyl-[protein] + phosphate. In Rattus norvegicus (Rat), this protein is Tyrosine-protein phosphatase non-receptor type 21 (Ptpn21).